We begin with the raw amino-acid sequence, 576 residues long: 4-alpha-glucanotransferase DPE1, chloroplastic/amyloplastic (576 aa).

Residues 1-45 (MSILLRPSSSPSLCSSLKLFRLSSPDSLIDAAVLRNRTKPSQSFR) constitute a chloroplast transit peptide.

This sequence belongs to the disproportionating enzyme family.

It localises to the plastid. Its subcellular location is the chloroplast. It is found in the amyloplast. It catalyses the reaction Transfers a segment of a (1-&gt;4)-alpha-D-glucan to a new position in an acceptor, which may be glucose or a (1-&gt;4)-alpha-D-glucan.. Functionally, chloroplastic alpha-glucanotransferase involved in maltotriose metabolism. Probably uses maltotriose as substrate to transfer a maltosyl unit from one molecule to another, resulting in glucose and maltopentaose. The latter can then be further metabolized to maltose and maltotriose by beta-amylase. Required for normal starch degradation in leaves. The polypeptide is 4-alpha-glucanotransferase DPE1, chloroplastic/amyloplastic (DPE1) (Arabidopsis thaliana (Mouse-ear cress)).